Here is a 380-residue protein sequence, read N- to C-terminus: Succinyl-diaminopimelate desuccinylase (380 aa).

His69 is a Zn(2+) binding site. The active site involves Asp71. Position 102 (Asp102) interacts with Zn(2+). Glu135 serves as the catalytic Proton acceptor. Positions 136, 164, and 353 each coordinate Zn(2+).

This sequence belongs to the peptidase M20A family. DapE subfamily. As to quaternary structure, homodimer. Zn(2+) serves as cofactor. Co(2+) is required as a cofactor.

It carries out the reaction N-succinyl-(2S,6S)-2,6-diaminopimelate + H2O = (2S,6S)-2,6-diaminopimelate + succinate. It participates in amino-acid biosynthesis; L-lysine biosynthesis via DAP pathway; LL-2,6-diaminopimelate from (S)-tetrahydrodipicolinate (succinylase route): step 3/3. Functionally, catalyzes the hydrolysis of N-succinyl-L,L-diaminopimelic acid (SDAP), forming succinate and LL-2,6-diaminopimelate (DAP), an intermediate involved in the bacterial biosynthesis of lysine and meso-diaminopimelic acid, an essential component of bacterial cell walls. The protein is Succinyl-diaminopimelate desuccinylase of Phenylobacterium zucineum (strain HLK1).